Reading from the N-terminus, the 344-residue chain is Trace amine-associated receptor 8b (344 aa).

The Extracellular segment spans residues 1 to 33 (MTSNFSQATLQLCYENVNASCIKTPYSPGLRVL). N4 and N18 each carry an N-linked (GlcNAc...) asparagine glycan. 2 disulfide bridges follow: C21/C185 and C104/C189. Residues 34-54 (LYMVFGFGAVLAVCGNLLVVI) traverse the membrane as a helical segment. Topologically, residues 55–67 (SVLHFKQLHSPAN) are cytoplasmic. The helical transmembrane segment at 68–88 (FLIASLASADFLVGISVMPFS) threads the bilayer. At 89 to 102 (MVRSIESCWYFGDT) the chain is on the extracellular side. The chain crosses the membrane as a helical span at residues 103 to 127 (FCSLHSCCDAAFCYSSLFHLCFISV). Residues 128-146 (DRYIAVTEPLVYPTKFTMS) lie on the Cytoplasmic side of the membrane. The chain crosses the membrane as a helical span at residues 147-167 (VSGICISISWILPLVYSSAVF). The Extracellular portion of the chain corresponds to 168-196 (YTGISATGIENLVSALNCVGGCQVAINQD). A helical transmembrane segment spans residues 197-217 (WVLISFLLFFIPTLVMIILYS). At 218–256 (KIFLVAKQQAVKIETSISGSKGESSLESHKARVAKRERK) the chain is on the cytoplasmic side. Residues 257-277 (AAKTLGVTVMAFMVSWLPYTI) form a helical membrane-spanning segment. Residues 278–295 (DTLIDAFMGFITPAYVYE) are Extracellular-facing. A helical transmembrane segment spans residues 296-319 (ICGWIAYYNSAMNPLIYAFFYPWF). The Cytoplasmic portion of the chain corresponds to 320-344 (RKAIKLILSGKILKGHSSTTSLFSE).

It belongs to the G-protein coupled receptor 1 family.

Its subcellular location is the cell membrane. Its function is as follows. Olfactory receptor activated by trace amines. Trace amine compounds are enriched in animal body fluids and act on trace amine-associated receptors (TAARs) to elicit both intraspecific and interspecific innate behaviors. Ligand-binding causes a conformation change that triggers signaling via G(s)-class of G alpha proteins (GNAL or GNAS). The polypeptide is Trace amine-associated receptor 8b (Rattus norvegicus (Rat)).